Here is a 347-residue protein sequence, read N- to C-terminus: Selenide, water dikinase (347 aa).

C17 is an active-site residue. ATP-binding positions include K20 and 48–50 (TRD). Position 51 (D51) interacts with Mg(2+). ATP-binding positions include D68, D91, and 139-141 (GHS). D91 contributes to the Mg(2+) binding site. D227 contributes to the Mg(2+) binding site.

Belongs to the selenophosphate synthase 1 family. Class I subfamily. Homodimer. Mg(2+) is required as a cofactor.

It carries out the reaction hydrogenselenide + ATP + H2O = selenophosphate + AMP + phosphate + 2 H(+). Synthesizes selenophosphate from selenide and ATP. The sequence is that of Selenide, water dikinase from Escherichia coli O9:H4 (strain HS).